The chain runs to 469 residues: UDP-N-acetylmuramate--L-alanine ligase (469 aa).

114 to 120 (GTHGKTT) is a binding site for ATP.

It belongs to the MurCDEF family.

The protein resides in the cytoplasm. The enzyme catalyses UDP-N-acetyl-alpha-D-muramate + L-alanine + ATP = UDP-N-acetyl-alpha-D-muramoyl-L-alanine + ADP + phosphate + H(+). It participates in cell wall biogenesis; peptidoglycan biosynthesis. Its function is as follows. Cell wall formation. This is UDP-N-acetylmuramate--L-alanine ligase from Sinorhizobium fredii (strain NBRC 101917 / NGR234).